We begin with the raw amino-acid sequence, 344 residues long: Glutamine synthetase (344 aa).

A GS beta-grasp domain is found at 4–86 (YKLEYIWLDG…VMCEVMMPDG (83 aa)). Residues 89–344 (PHASNKRATI…SVPTEKKAVA (256 aa)) enclose the GS catalytic domain. Mg(2+)-binding residues include E109 and E111. E167 serves as a coordination point for ATP. Mg(2+) is bound by residues E172 and E179. Residue E278 participates in L-glutamate binding.

The protein belongs to the glutamine synthetase family. In terms of assembly, homooctamer and homotetramer. It depends on Mg(2+) as a cofactor.

It localises to the cytoplasm. The enzyme catalyses L-glutamate + NH4(+) + ATP = L-glutamine + ADP + phosphate + H(+). Catalyzes the ATP-dependent biosynthesis of glutamine from glutamate and ammonia. The sequence is that of Glutamine synthetase from Bradyrhizobium diazoefficiens (strain JCM 10833 / BCRC 13528 / IAM 13628 / NBRC 14792 / USDA 110).